A 671-amino-acid chain; its full sequence is Phosphoenolpyruvate carboxykinase (ATP) 1 (671 aa).

The span at 1–10 shows a compositional bias: low complexity; that stretch reads MSAGNGNATN. Residues 1 to 44 form a disordered region; the sequence is MSAGNGNATNGDGGFSFPKGPVMPKITTGAAKRGSGVCHDDSGP. S2 is subject to N-acetylserine. Residue S62 is modified to Phosphoserine. T66 carries the post-translational modification Phosphothreonine. The disordered stretch occupies residues 100–127; the sequence is TRESGPKVVRGDPAEKKTDGSTTPAYAH. Basic and acidic residues predominate over residues 108–118; that stretch reads VRGDPAEKKTD. R189 is a binding site for substrate. H270 and N271 together coordinate Ca(2+). Residues Y328 and K334 each coordinate substrate. ATP contacts are provided by residues K334, H353, and 369–377; that span reads GLSGTGKTT. Mn(2+)-binding residues include K334 and H353. D390 contributes to the Mn(2+) binding site. G404 contributes to the Ca(2+) binding site. ATP-binding positions include E418, R455, 574–575, I575, and T580; that span reads RI. R455 lines the substrate pocket.

This sequence belongs to the phosphoenolpyruvate carboxykinase (ATP) family. In terms of assembly, monomer. The cofactor is Mn(2+). Expressed in cotyledons, flowers, siliques, seeds, leaves, stems and roots. Localized in mid-veins.

Its subcellular location is the cytoplasm. It catalyses the reaction oxaloacetate + ATP = phosphoenolpyruvate + ADP + CO2. It functions in the pathway carbohydrate biosynthesis; gluconeogenesis. Allosterically activated by calcium. It may represent the only case of a monomeric, allosteric enzyme. Involved in the gluconeogenesis. Catalyzes the conversion of oxaloacetate (OAA) to phosphoenolpyruvate (PEP) through direct phosphoryl transfer between the nucleoside triphosphate and OAA. The polypeptide is Phosphoenolpyruvate carboxykinase (ATP) 1 (Arabidopsis thaliana (Mouse-ear cress)).